Here is a 407-residue protein sequence, read N- to C-terminus: MKDKYDVLVIGAGPAGSIAAKTAAEKGLDVLLIEKRQEIGDPVRCAEGVNKECLKKHVEIDKRWICADLKGSCIFSPDGTKIEMAEEISGGEVGYVLERKVFDRALAEHAATAGAEVRVKTRATGLIIEDDFVKGARLMHLGKEYEVRASIVIGADGVESKVGRWAGIDTALKPVDVETCAQYLIAGADINQEYCEFYIGNEMAPGGYVWVFPKGGGKANVGIGILGSKMGKFKPRPVDYLNDFVQKKFPDARIVEMVFGGVPVSGSIEKTSVNGLMLVGDAARQSDPITGGGILNAMDAGKLAGEAAYEAISAGDVSVVKLEEVYEKKWRDTVGHDIDMSLIVKNCFINLTDDDLDSLAHSLKDVKFERMSLLDLLQALFKANKKLLWDLRVLFKDAAKEVIKNKT.

The FAD site is built by A15, E34, C45, A46, G48, R99, A123, D281, G293, and I294.

It belongs to the geranylgeranyl reductase family. DGGGPL reductase subfamily. Requires FAD as cofactor.

The enzyme catalyses a 2,3-bis-O-phytanyl-sn-glycerol 1-phospholipid + 8 oxidized 2[4Fe-4S]-[ferredoxin] = a 2,3-bis-O-(geranylgeranyl)-sn-glycerol 1-phospholipid + 8 reduced 2[4Fe-4S]-[ferredoxin] + 16 H(+). The catalysed reaction is 2,3-bis-O-(phytanyl)-sn-glycerol 1-phosphate + 8 oxidized 2[4Fe-4S]-[ferredoxin] = 2,3-bis-O-(geranylgeranyl)-sn-glycerol 1-phosphate + 8 reduced 2[4Fe-4S]-[ferredoxin] + 16 H(+). It carries out the reaction a 2,3-bis-O-phytanyl-sn-glycerol 1-phospholipid + 8 A = a 2,3-bis-O-(geranylgeranyl)-sn-glycerol 1-phospholipid + 8 AH2. It catalyses the reaction CDP-2,3-bis-O-(geranylgeranyl)-sn-glycerol + 8 AH2 = CDP-2,3-bis-O-(phytanyl)-sn-glycerol + 8 A. The enzyme catalyses archaetidylserine + 8 AH2 = 2,3-bis-O-phytanyl-sn-glycero-3-phospho-L-serine + 8 A. The protein operates within membrane lipid metabolism; glycerophospholipid metabolism. Its function is as follows. Is involved in the reduction of 2,3-digeranylgeranylglycerophospholipids (unsaturated archaeols) into 2,3-diphytanylglycerophospholipids (saturated archaeols) in the biosynthesis of archaeal membrane lipids. Catalyzes the formation of archaetidic acid (2,3-di-O-phytanyl-sn-glyceryl phosphate) from 2,3-di-O-geranylgeranylglyceryl phosphate (DGGGP) via the hydrogenation of each double bond of the isoprenoid chains. Is also probably able to reduce double bonds of geranyl groups in CDP-2,3-bis-O-(geranylgeranyl)-sn-glycerol and archaetidylserine, thus acting at various stages in the biosynthesis of archaeal membrane lipids. This Methanosarcina mazei (strain ATCC BAA-159 / DSM 3647 / Goe1 / Go1 / JCM 11833 / OCM 88) (Methanosarcina frisia) protein is Digeranylgeranylglycerophospholipid reductase.